Consider the following 368-residue polypeptide: Chaperone protein DnaJ (368 aa).

The 66-residue stretch at 5–70 (DYYQVLGVPR…KKRKLYDTHG (66 aa)) folds into the J domain. Residues 124–201 (GVERQIQIPT…CNGAGRVEDH (78 aa)) form a CR-type zinc finger. Positions 137, 140, 153, 156, 175, 178, 189, and 192 each coordinate Zn(2+). CXXCXGXG motif repeat units follow at residues 137–144 (CTHCHGSG), 153–160 (CGTCRGSG), 175–182 (CPHCGGRG), and 189–196 (CKVCNGAG).

The protein belongs to the DnaJ family. Homodimer. Zn(2+) is required as a cofactor.

The protein localises to the cytoplasm. Functionally, participates actively in the response to hyperosmotic and heat shock by preventing the aggregation of stress-denatured proteins and by disaggregating proteins, also in an autonomous, DnaK-independent fashion. Unfolded proteins bind initially to DnaJ; upon interaction with the DnaJ-bound protein, DnaK hydrolyzes its bound ATP, resulting in the formation of a stable complex. GrpE releases ADP from DnaK; ATP binding to DnaK triggers the release of the substrate protein, thus completing the reaction cycle. Several rounds of ATP-dependent interactions between DnaJ, DnaK and GrpE are required for fully efficient folding. Also involved, together with DnaK and GrpE, in the DNA replication of plasmids through activation of initiation proteins. This is Chaperone protein DnaJ from Xylella fastidiosa (strain M23).